Reading from the N-terminus, the 244-residue chain is Transcriptional regulatory protein AruR (244 aa).

The 119-residue stretch at 6 to 124 folds into the Response regulatory domain; the sequence is RVLVVDDDPV…ELVSRAKNLI (119 aa). At Asp60 the chain carries 4-aspartylphosphate. Positions 139–239 form a DNA-binding region, ompR/PhoB-type; sequence QALRQFGDWL…IHGAGYLFTA (101 aa).

Post-translationally, phosphorylated by AruS.

It is found in the cytoplasm. Its pathway is amino-acid degradation; L-arginine degradation [regulation]. Functionally, member of the two-component regulatory system AruS/AruR, which is involved in the regulation of the arginine transaminase (ATA) pathway in response to exogeneous L-arginine. Regulates transcription of aruH and aruI. The protein is Transcriptional regulatory protein AruR (aruR) of Pseudomonas aeruginosa (strain ATCC 15692 / DSM 22644 / CIP 104116 / JCM 14847 / LMG 12228 / 1C / PRS 101 / PAO1).